The following is a 485-amino-acid chain: Adenylate kinase 8 (485 aa).

Adenylate kinase regions lie at residues 58 to 258 (PRVF…TFVL) and 269 to 472 (PRIL…YTVS). ATP is bound at residue 67–72 (ASGKHT). Residues 87-113 (TPESVLSSDVSLLAKEAQSYRDKGQEV) form an NMP 1 region. Residues 140 to 143 (GFPK) and Gln-147 each bind AMP. The segment at 177–206 (GKRIDTANGEVYHTTFDWPSDPTVQRNLVE) is LID 1. Residue Arg-218 coordinates AMP. Position 278 to 283 (278 to 283 (GSGRSL)) interacts with ATP. The NMP 2 stretch occupies residues 298–327 (CCGQVLKEAVADQTKLGEVIQPYIENDQQV). AMP is bound by residues 325-327 (QQV), 354-357 (GFPR), and Gln-361. An LID 2 region spans residues 391-424 (LCMTDPVSGERYHDIYKPAPSSEVHERLQQNPRH). Arg-432 is a binding site for AMP.

Belongs to the adenylate kinase family.

The protein localises to the cytoplasm. Its subcellular location is the cytosol. The catalysed reaction is AMP + ATP = 2 ADP. The enzyme catalyses a 2'-deoxyribonucleoside 5'-diphosphate + ATP = a 2'-deoxyribonucleoside 5'-triphosphate + ADP. It carries out the reaction a ribonucleoside 5'-diphosphate + ATP = a ribonucleoside 5'-triphosphate + ADP. Nucleoside monophosphate (NMP) kinase that catalyzes the reversible transfer of the terminal phosphate group between nucleoside triphosphates and monophosphates. Has highest activity toward AMP, and weaker activity toward dAMP, CMP and dCMP. Also displays broad nucleoside diphosphate kinase activity. The chain is Adenylate kinase 8 (ak8) from Xenopus tropicalis (Western clawed frog).